The sequence spans 130 residues: MSMQDPLADMLTRIRNAQMAEKPVVSMPSSTLKVAVAKVLKDEGYIAGYQISSEVKSSLSIELKYFEGRPVIEEVKRVSRPGLRQYKSSDDLPKVRGGLGVSIVSTSKGVMTDRAARAAGVGGEVLCTVF.

The protein belongs to the universal ribosomal protein uS8 family. In terms of assembly, part of the 30S ribosomal subunit. Contacts proteins S5 and S12.

Functionally, one of the primary rRNA binding proteins, it binds directly to 16S rRNA central domain where it helps coordinate assembly of the platform of the 30S subunit. The polypeptide is Small ribosomal subunit protein uS8 (Pseudomonas syringae pv. tomato (strain ATCC BAA-871 / DC3000)).